A 61-amino-acid polypeptide reads, in one-letter code: Metallothionein-1E (61 aa).

N-acetylmethionine is present on Met1. The segment at 1–29 (MDPNCSCPTGGSCSCAGSCTCKACRCTSC) is beta. Cys5, Cys7, Cys13, Cys15, Cys19, Cys21, Cys24, Cys26, Cys29, Cys33, Cys34, Cys36, Cys37, Cys41, Cys44, Cys48, Cys50, Cys57, Cys59, and Cys60 together coordinate a divalent metal cation. The interval 30 to 61 (KKSCCSCCPVGCAKCAQGCICKGASDKCSCCA) is alpha.

It belongs to the metallothionein superfamily. Type 1 family. Monomer.

Its function is as follows. Metallothioneins have a high content of cysteine residues that bind various heavy metals; these proteins are transcriptionally regulated by both heavy metals and glucocorticoids. The polypeptide is Metallothionein-1E (MT1E) (Sus scrofa (Pig)).